A 232-amino-acid polypeptide reads, in one-letter code: Ribose-5-phosphate isomerase A (232 aa).

Substrate-binding positions include 31-34 (TGST), 88-91 (DGAD), and 101-104 (KGGG). Residue glutamate 110 is the Proton acceptor of the active site. Lysine 128 contacts substrate.

The protein belongs to the ribose 5-phosphate isomerase family. In terms of assembly, homodimer.

It catalyses the reaction aldehydo-D-ribose 5-phosphate = D-ribulose 5-phosphate. Its pathway is carbohydrate degradation; pentose phosphate pathway; D-ribose 5-phosphate from D-ribulose 5-phosphate (non-oxidative stage): step 1/1. Functionally, catalyzes the reversible conversion of ribose-5-phosphate to ribulose 5-phosphate. In Lactobacillus gasseri (strain ATCC 33323 / DSM 20243 / BCRC 14619 / CIP 102991 / JCM 1131 / KCTC 3163 / NCIMB 11718 / NCTC 13722 / AM63), this protein is Ribose-5-phosphate isomerase A.